Here is a 607-residue protein sequence, read N- to C-terminus: UvrABC system protein C (607 aa).

The GIY-YIG domain maps to 16–94; that stretch reads GRPGVYRMFD…IKEWRPPYNI (79 aa). Positions 203 to 238 constitute a UVR domain; it reads NALSDELNASMEKAAMALDFERAAELRDQVALLRRV.

It belongs to the UvrC family. As to quaternary structure, interacts with UvrB in an incision complex.

It is found in the cytoplasm. Functionally, the UvrABC repair system catalyzes the recognition and processing of DNA lesions. UvrC both incises the 5' and 3' sides of the lesion. The N-terminal half is responsible for the 3' incision and the C-terminal half is responsible for the 5' incision. In Pseudomonas syringae pv. syringae (strain B728a), this protein is UvrABC system protein C.